We begin with the raw amino-acid sequence, 164 residues long: Ribonuclease H (164 aa).

Residues 9–150 (DMPRVTIYTD…ADTLANAATD (142 aa)) enclose the RNase H type-1 domain. Mg(2+) contacts are provided by Asp-18, Glu-56, Asp-78, and Asp-142.

This sequence belongs to the RNase H family. As to quaternary structure, monomer. Mg(2+) serves as cofactor.

It localises to the cytoplasm. The enzyme catalyses Endonucleolytic cleavage to 5'-phosphomonoester.. Functionally, endonuclease that specifically degrades the RNA of RNA-DNA hybrids. This chain is Ribonuclease H, found in Chromohalobacter salexigens (strain ATCC BAA-138 / DSM 3043 / CIP 106854 / NCIMB 13768 / 1H11).